The primary structure comprises 71 residues: Large ribosomal subunit protein uL29 (71 aa).

This sequence belongs to the universal ribosomal protein uL29 family.

This chain is Large ribosomal subunit protein uL29, found in Roseiflexus sp. (strain RS-1).